The sequence spans 326 residues: Thrombopoietin (326 aa).

Positions 1 to 21 (MELTDLLLVAILLLTARLTLS) are cleaved as a signal peptide. Cystine bridges form between C28–C172 and C50–C106. N197, N206, N235, N249, and N256 each carry an N-linked (GlcNAc...) asparagine glycan. The disordered stretch occupies residues 307-326 (FPPSPTFPTPGSPPQLPPVS). The span at 308-326 (PPSPTFPTPGSPPQLPPVS) shows a compositional bias: pro residues.

The protein belongs to the EPO/TPO family.

The protein localises to the secreted. Lineage-specific cytokine affecting the proliferation and maturation of megakaryocytes from their committed progenitor cells. It acts at a late stage of megakaryocyte development. It may be the major physiological regulator of circulating platelets. The polypeptide is Thrombopoietin (Thpo) (Rattus norvegicus (Rat)).